A 346-amino-acid chain; its full sequence is Heterogeneous nuclear ribonucleoprotein A2 homolog 1 (346 aa).

RRM domains are found at residues arginine 9–lysine 92 and lysine 100–glutamine 179. Disordered stretches follow at residues glutamine 182–glycine 217 and asparagine 326–tyrosine 346. Over residues glycine 193–glycine 217 the composition is skewed to gly residues. Positions glutamine 297–tyrosine 340 are nuclear targeting sequence.

The protein resides in the nucleus. Functionally, forms complexes (ribonucleosomes) with at least 20 other different hnRNP and heterogeneous nuclear RNA in the nucleus. This chain is Heterogeneous nuclear ribonucleoprotein A2 homolog 1, found in Xenopus laevis (African clawed frog).